The primary structure comprises 5161 residues: MPGSLLFDVNKLDVEKIWERNRGPLRAVNRCVHSLYEEQAIARPNACAIHAWDGNMTYEQLNQHSTRLASYLVTQGIGTEVMVPLCFEKSIWAIVAMLAVLKAGAAFVPLDPMHPRARHEEIFKQTNAKLVLTSVQHAALWPNSGLQFLAIDKTFVDQLPWETKIRSKVKPIDAVYVMFTSGSTGVPKGVVLEHRAIATSCLAHGMEMKLGSDSRALQFAAYTFDICIAEIFTTLIFGGCVCVPSEDDRRNALSEVINNNNINWAQLTPTVARLLDPSTVPSLRVLVLGGERVDEADWKRWGDDIVKVNVYGPTECSIWCTSYSNTDREFRSGTIGTSMASFSWVTDPEDHNKLVPFGTIGELLIEGPILARGYLNDISKTEAVFVDGPLWLRQGNRNDESTRRQGRLYKTGDLVYYDADGNLVYAGRKDSQTKVRGQRIELGEIEHHLNQCMSGIKQVAAEVILPSGDQAKAMVAAFVQLSEEPRHALVQQTSNGDLEVRVIFPTYLDELLVQCLPKDMVPEVYFAVAELPLTTSAKVDRQKLRKIGASFSAQQLAQLRTYSDDPKRQPETEKEQILHHLWAQVLSIDASSIGMDDSFFDLGGDSIAAMKLVGEARRSGIYITVAVVFQNPTLDKLTSAAIPSVDVSNTTIPPVGHDGHVAQSFAQGRMWFLEELHPGLTWYLMPVVVRMRGPLELTALQSALNAIESRHETLRTTFETIGDTSMQLVHPYHAKELSIIDIDIKSLEEVLHRDQISPFDLRKEAGLRVSIYRIGSEEHVLSVIMHHIISDGWSTDVFTRELGAFYSASIRGHDPLVQVQPLPIQYRDFSVWQRQQAQIDKHRSQLNYWFNVLNTSRPAELLCDKARPAALSGEASKQTIQIDGPLYIQLLQFCKAKGVTKFMVLFAAFRATHFRLTGQNDATIGTVNANRDRWELKDMIGFFVNLQCLRTTIDADESFEELVQQVYEATIASLANADVPFENIVSKLKNSRDLSRHPLVQLVFAMHSQRNLGQLKLEGLETESLDNAPKSRFDLEFHFFQQEDSLKGEVVYSTDIYSPEAIDNMLSIFQIVLEGCLQEPKAAIASLSLLCDVELSKLNSMGLIQVEKTDYPRESSVVDLFRQQTSLCPSRIAVKDASVTMTYTQLDKESDILAQWLAKQSLAPETLVSVLAGRSCQTIVAFLAILKAGLAYLPFDVRVPAKRMSTILGSLSGPKFVLLGEDVQPPYVDISDIRFIRITEALDEQTHEGSASRDIVKPTANSLAYVMFTSGSTGQPKGAMIEHRGIVRLVRDNNFVQHLPASPVMAHMTNLAFDVSTWEIYASLLQGGTLVCIDRLTVLDPEAVLRTFRQEHVSTAFMTPSLFRTYVQQLPALFAGLDMLCVGGEALHSNDILSMTTLRTGKIINGYGPTENTTFNTTFVLSREGQYPNGVPIGRALSNSGAYVMDLKQQLVPLGVVGELVVTGDGLARGYTDLERNIYRFITVQIGGEVVKAYRTGDSVRYRPADGQLEYFGRMDGQVKIRGHRIELGEIEHVLRSHGSVREAVAVVQQQQNADEAARLAAFVTVYEGDELVEEKPSGIDESEHVDVWEDQFDSKVYTPISKVLPEAIGRDFIGWTSMYDGSAIDKVEMNEWLDDTIDTMLNGHPPGKVLEVGTGTGMVLFNLGDGLESYVGLDPSSRAVEFVKDTVRSVPTLADKVRVYKATATEIDRLEPIDASLIVINSVIQYFPSLEYLFKTTQQLLGLESVSTIFFGDVRSYALHREFLATRAMFMAGDSADRAEVSRMITDMELVEKELLVDPAFFTALPERLPDQVEHVEILPKKMKATNELSCYRYAAVIHVKPRDGRKQEQRIRHVGHDEWIDFREHKLDRQSLLAQLQSNPRPSTMAVSNIPYSKTIVSRCLIESIDNAVAELSDPQDWYSSVCQRAQCSSSMSATDLYELAKEANCRVEVSWSRQHSQCGGIDAIFHRYPPRGGENRVMFQFPTDHAERPLHTLSSMPLRQQTLQRIQGQLQEMLDAQLPAYMVPQTVTFLETMPTNQNGKIDRNALTQRTEIQVAKGQEFQRELTRAESKIQQLIARVLRIDSDRIGLDDSFFQLGGDSIAAMKLVALARDEDIRLTVAKIFQYPKLIQLAAVAQEHVYVPNDNIVPFSLLDDEVDATQTHHEVAVKCAIDRGIIEDIYPCSPLQEGLMSLTVKRPGDYIMQTVLELREEVDETAFKIAWEKTVQSFQILRTRIVIHETLGLLQAVIAEKIKWADADDLATYLARDKLSSMQLGKPLARYGLVRDTRREKKWFVWTIHHAIYDGWALNHISVLCKQHTMAGKPGKQVGFNSFIKYLRQMDEDALAEYRRTTLSDCDANVFPPLVSGVQQPVADATAEYCCPPLPKRTSNTTISTLVRAAWAIVASGYTSSDDVVFGATVTGRNAPVAGIESLVGPVIATVPVRIRLQRDSTILEFLETVQKQATEMIPFEQTGLQRIAKLGPDTEHACNFQTLLIVQPAEDAFQSDDMFGTWEFGSGLQDFTTYGLMVQCKLAKEGVKITASFDARLVEQWQVERMLGQLSFVMQQLARGDSRTRVMDIGMLTQDDEQQLWMWNQRLPPAIDRCVHDLYSDQAKSRPEADAICAWDGVMTYKELDERSSRLATYLVDIGVKPETIVPLCFEKSMWMVVAMLAVLKAGGAFAPLDPSHPVSRHRDIFTQTKANMMLTSSQYANLWSEYIPTVVEITGHFIDQLTTNPYSTETAVQPGNTAYVIFTSGSTGVPKGVQMEHKAVSTSCSCQGPALGITEDTRVLQFAAYTFDACILEIITTLLHGACICIPSETQRRDHLVNTINTMKVTWALLTPAVARILDPQKIVSLKTLVLGGEKVNGSDCDTWSGRVRLINAYGPTECCVSCVASPDMKGLDPEPIGKPIASIGWVTNPNDHNRLAPLGAVGELLVEGPNLARGYLDDAKKTETAFVHDPLWLLRGCEGYSGRRGRLYKTGDLVYHTSDGDLVYVGRKDGQVKVRGQRIELAEIEICLYQHISDIKEIAVELISPTGGKPMIAAFLKANPELLNDKLSDGDSGVYVVYPARVDNELSQRLPRNMVPEVYFALTEFPISTSGKINRRRLREIGGSFSTDQLARLRTQKNESSDRKPETKHEMALQKLWAQVLNIEATSIGLNDSFFQLGGDSISAMKLVSEARNVDLVFSVQDVFQVQRLGRLANRLVDPPTSSHSAITKIDHQRPVLQSFAQGRLWFLEQLHPGLDWYLMHLAVRIKGPVQLPALQAALQAIEHRHETLRTTFSTNNGESLQEVHPFCGGRELNVIDVGSNDDKILLEALERDQKTPFNLRYEPGWRISIYRINDVSHVLSIVMHHIVSDGWSVDVLKKELSALYASAIRNEDPIFCLPPLPIQYRDFSVWQRLPEQAQEHRRQLDYWINQLDGSRPAEFLYDKPRPTTLSGKAGTQRLNISHKLYNRLQIFARQRGMTPFVVLLAVFRATHYRLTNQDDATIAVPNANRSRPELGDLIGFFVNIQCMRMKIQDETFEELLQHAYKTVVDSLANQDVPFESIVSALQGDRDSSRNPLAQVAFAVHSQQDIGKLDFEGVGTEAIEGLATSRFDLEFHFFQEKNGFQGYIYFSEELFVPETIYSLASVFTSILDNCLDKPETQIAVVPLMTVEAHTQLDQMGLLRMHQTAYPRNSSIVDVFRQQAAMQPSRVAVKDTSTDLTYAQLDSQSEKLAKFLATKSFAPETAVGVLAHRCCQAIVAFIGILKAGLAYLPFDHKAPEKRMESIFSTIEGNKLVLIGPNISLPGTGPKDVEFAYIPDILDADEDFEFTRSELDPTLRPTASSLAYILFTSGSTGQPKGVMVEHRGIVRLAQHDQMEHFKSSGAMAHMANLAFDGSSWEIYTCLLNGGTLVCIDATTVLDQDALLRAFTESQIRIAFITPALLNYILAESPDTIGNLDTLLVAGDRADVDDVFRARDLVRNKVVANAYGPTENSVMSTLYILSEDENCVNGVPIGRPISNSAAYVMDPEQNLVPLGVFGELVVTGDGVARGYTDPRRNVDRFVTVTIGHQTMRAYRTGDYVRQRPRDGEMEFFGRIDGQVKIRGNRVELGEIETVLRGHGLVRDAVVVAEQRKDKNQRLFGYITLKEDFEMLSAQNSDDDQIQHVNAWEHRFNTETYAQIVGIQSETVGQDFIGWTSMYDGTDIDKTEMKEWLEETIGSIHDKVGGQLGNVLEIGSGSGMILFNLGDSLKHYTGFEPSRKAVEFVTGTARSIPSLANKVEMYKATAADISKVDQPLQADLVVLNSVVQYFPSQGYLFNVVRDLLKVDGVKTLFFGDIRSYALRREFYAARALFMAGERASQKDLRRLVEDMEQIEQELLVDPGFFTSLTHRLPDLVQHVEIQPKRMRATNELSSYRYTAVVYSRSREPPCGGLRTIPDNEWIDFQEQGLNNDSLQQRIKDVSSTHPLAVSNISHTKTLFGNCLLGALGDGKARKPVHTDWTAHINRQAKGIPSLSAVDLDEMAKAAGCQVRISWNRQYSQHGGLDAIFYPRQINGGSDKAGVMFSFPTDHAERRRQTLSNKPMRQQLVKEVQQQLDELVKVQLPSYMVPQSIQVLNQLPINQNGKVDRKALIQRTRTQTEVSQGGLQRELSTAELKVQRILSRVLGIEASRMGLEDSFFQLGGDSIAAMKIVAAAREEEIHLTIANIFQHPKLVNLATVAQFSQHEGEQKSIQPFSLLSTTQRDYLLHAIPENTSNVNGNDIIDILPTTWMQNLFISRGVNIQPLAFNYFFLNLGTRVDASRLRSSIPTLVQQFSILRTKFVYVDGVLWQTVLRKPHVPFTEFHLDMSLEEAADTVCLEDSRTTDPLELATAFMLIRGTSNEHLLAIRITHAQYDGVCFPSFVKALFAIYSGKSVEPAHNHSTYLAYTRERKSVSALHWRDVLHGSRMTKATPLLSPSIRHGMIPVEVQTESIIGMPHVPTGLTLASLVSAAWAKVLSQITGEEDVVYGYMVAGRNANIPAITKIVGPCLNIIPVRARLHAKTTSTELIRSIQEQYIALGEADSMGFDEIVRTSTDWPADTEYDSVFQHQNLNEHPEFDFEGTSSRLHWFQNPDSVPCILTVVSYPLEDGLRIVVRGNEHIITPESAERINKLLCETIGALSSSLQ.

Residues 37–436 (EEQAIARPNA…GRKDSQTKVR (400 aa)) form an adenylation 1 region. In terms of domain architecture, Carrier 1 spans 569–645 (QPETEKEQIL…KLTSAAIPSV (77 aa)). Position 606 is an O-(pantetheine 4'-phosphoryl)serine (Ser606). Residues 659–1098 (GHVAQSFAQG…LLCDVELSKL (440 aa)) are condensation 1. Positions 1122–1522 (RQQTSLCPSR…GRMDGQVKIR (401 aa)) are adenylation 2. The tract at residues 1630–1742 (MNEWLDDTID…YLFKTTQQLL (113 aa)) is methyltransferase (M) domain 1. The Carrier 2 domain maps to 2068-2141 (TRAESKIQQL…QLAAVAQEHV (74 aa)). Ser2102 bears the O-(pantetheine 4'-phosphoryl)serine mark. Residues 2179–2593 (EDIYPCSPLQ…MLTQDDEQQL (415 aa)) are condensation 2. The tract at residues 2614 to 3010 (DQAKSRPEAD…GRKDGQVKVR (397 aa)) is adenylation 3. In terms of domain architecture, Carrier 3 spans 3139 to 3215 (KPETKHEMAL…RLANRLVDPP (77 aa)). Residue Ser3176 is modified to O-(pantetheine 4'-phosphoryl)serine. A condensation 3 region spans residues 3232-3668 (LQSFAQGRLW…VVPLMTVEAH (437 aa)). Positions 3694-4098 (FRQQAAMQPS…GRIDGQVKIR (405 aa)) are adenylation 4. Residues 4203-4329 (EMKEWLEETI…KVDGVKTLFF (127 aa)) form a methyltransferase (M) domain 2 region. The Carrier 4 domain maps to 4643-4725 (RELSTAELKV…QFSQHEGEQK (83 aa)). Ser4680 is modified (O-(pantetheine 4'-phosphoryl)serine). Residues 4785 to 5093 (FFLNLGTRVD…HQNLNEHPEF (309 aa)) are condensation 4.

This sequence belongs to the NRP synthetase family.

It participates in phytotoxin biosynthesis. Its function is as follows. Nonribosomal peptide synthetase; part of the gene cluster that mediates the biosynthesis of the phytotoxin tentoxin, an inhibitor the F1-ATPase activity of chloroplasts, resulting in chlorosis in sensitive plants. Tentoxin is a cyclic tetrapeptide that consists of four amino acid residues: glycine (Gly), alanine (Ala), leucine (Leu), and dehydrophenylalanine (DPhe). In addition, both the Ala and DPhe residues are N-methylated. The nonribosomal peptide synthetase TES assembles tentoxin from the four substrate amino acids. The adenylation domains of each of the 4 modules are responsible for the activation of Gly, Ala, Leu and DPhe, respectively. In addition, the N-methyltransferase domains in the second and fourth modules of TES could be responsible for N-methylation of Ala and DPhe residues. Finally, the condensation domain located in the termination module probably catalyzes the formation of the intramolecular macrocyclization and then the release of tentoxin. The cytochrome P450 monooxygenase TES1 is predicted to be involved in the formation of DPhe. The chain is Nonribosomal peptide synthetase TES from Alternaria alternata (Alternaria rot fungus).